Consider the following 933-residue polypeptide: Isoleucine--tRNA ligase (933 aa).

The 'HIGH' region signature appears at 57 to 67 (PYANGNIHVGH). Glu-554 contributes to the L-isoleucyl-5'-AMP binding site. Residues 595 to 599 (KMSKS) carry the 'KMSKS' region motif. Residue Lys-598 participates in ATP binding.

It belongs to the class-I aminoacyl-tRNA synthetase family. IleS type 1 subfamily. Monomer.

The protein resides in the cytoplasm. The enzyme catalyses tRNA(Ile) + L-isoleucine + ATP = L-isoleucyl-tRNA(Ile) + AMP + diphosphate. In terms of biological role, catalyzes the attachment of isoleucine to tRNA(Ile). As IleRS can inadvertently accommodate and process structurally similar amino acids such as valine, to avoid such errors it has two additional distinct tRNA(Ile)-dependent editing activities. One activity is designated as 'pretransfer' editing and involves the hydrolysis of activated Val-AMP. The other activity is designated 'posttransfer' editing and involves deacylation of mischarged Val-tRNA(Ile). This Streptococcus pyogenes serotype M28 (strain MGAS6180) protein is Isoleucine--tRNA ligase.